A 429-amino-acid polypeptide reads, in one-letter code: 3-phosphoshikimate 1-carboxyvinyltransferase (429 aa).

Lysine 22, serine 23, and arginine 27 together coordinate 3-phosphoshikimate. Lysine 22 lines the phosphoenolpyruvate pocket. Phosphoenolpyruvate is bound by residues glycine 93 and arginine 122. Serine 168, serine 169, glutamine 170, serine 196, aspartate 311, and lysine 338 together coordinate 3-phosphoshikimate. Glutamine 170 provides a ligand contact to phosphoenolpyruvate. The active-site Proton acceptor is the aspartate 311. 2 residues coordinate phosphoenolpyruvate: arginine 342 and arginine 384.

This sequence belongs to the EPSP synthase family. As to quaternary structure, monomer.

Its subcellular location is the cytoplasm. It carries out the reaction 3-phosphoshikimate + phosphoenolpyruvate = 5-O-(1-carboxyvinyl)-3-phosphoshikimate + phosphate. It participates in metabolic intermediate biosynthesis; chorismate biosynthesis. In terms of biological role, catalyzes the transfer of the enolpyruvyl moiety of phosphoenolpyruvate (PEP) to the 5-hydroxyl of shikimate-3-phosphate (S3P) to produce enolpyruvyl shikimate-3-phosphate and inorganic phosphate. In Methanocaldococcus jannaschii (strain ATCC 43067 / DSM 2661 / JAL-1 / JCM 10045 / NBRC 100440) (Methanococcus jannaschii), this protein is 3-phosphoshikimate 1-carboxyvinyltransferase.